The primary structure comprises 350 residues: MIKKYSFVNHRIVLYLILGCVVVCGVWYSFDVRQAIDVGAVDLSLPRMSNNLLKEVAVGEGKTTNRLSRLPVDSTVPTVLPQSLAGSIAPPLPLDAYGHLARVSAVRDFFDYFLTAQNDLTPAALDELVTHEIVKQLHGTSAQVEAQDVWTRYCAYFSQLVKLPDLGMVLGDKLDFVAVQRALDQRASLAVRTLGDWSEPFFGAEQQRQRYDLERLKIADDQALTDEQKKKRLVALEQKLPSKVQEERIKIQQQQDAVVKIIQLQKDEVTPDGIRLQVVGLLGPEVAYRVAEMRRQDEIWQEKYKHYAAQRVQIEAQQLEPKEHDVQVENLRQRIFTKPGEALRAASLDQ.

Residues 12-32 (IVLYLILGCVVVCGVWYSFDV) form a helical membrane-spanning segment.

It belongs to the lipase chaperone family.

The protein localises to the cell inner membrane. Its function is as follows. May be involved in the folding of the extracellular lipase during its passage through the periplasm. In Xylella fastidiosa (strain 9a5c), this protein is Lipase chaperone (lifO).